The sequence spans 518 residues: Lysine--tRNA ligase (518 aa).

Glutamate 407 and glutamate 414 together coordinate Mg(2+).

This sequence belongs to the class-II aminoacyl-tRNA synthetase family. In terms of assembly, homodimer. It depends on Mg(2+) as a cofactor.

The protein localises to the cytoplasm. It catalyses the reaction tRNA(Lys) + L-lysine + ATP = L-lysyl-tRNA(Lys) + AMP + diphosphate. This is Lysine--tRNA ligase from Helicobacter hepaticus (strain ATCC 51449 / 3B1).